Consider the following 779-residue polypeptide: Endonuclease MutS2 (779 aa).

An ATP-binding site is contributed by 328–335 (GPNTGGKT). One can recognise a Smr domain in the interval 704–779 (LDLRGKRYEE…GSGATIVTLG (76 aa)).

Belongs to the DNA mismatch repair MutS family. MutS2 subfamily. As to quaternary structure, homodimer. Binds to stalled ribosomes, contacting rRNA.

Its function is as follows. Endonuclease that is involved in the suppression of homologous recombination and thus may have a key role in the control of bacterial genetic diversity. Acts as a ribosome collision sensor, splitting the ribosome into its 2 subunits. Detects stalled/collided 70S ribosomes which it binds and splits by an ATP-hydrolysis driven conformational change. Acts upstream of the ribosome quality control system (RQC), a ribosome-associated complex that mediates the extraction of incompletely synthesized nascent chains from stalled ribosomes and their subsequent degradation. Probably generates substrates for RQC. The chain is Endonuclease MutS2 from Streptococcus pyogenes serotype M1.